The primary structure comprises 296 residues: MSTFLQDNGDLSAVLVKFAPFAVAVIAILAAWKFTGSSKPRKVLNPSEFQNFVLKEKTDISHNVAIYRFALPRPTDILGLPIGQHISLAATIEGQPKEVVRSYTPISSDNEAGYFDLLVKAYPQGNISKYLTTLKIGDTLKVRGPKGAMVYTPNMCRHIGMIAGGTGITPMLQIIKAIIRNRPRNGGNDTTKIDLIFANVNEEDILLRDELEKLAKEDDGFRIFYVLNNPPPGWNGGFGFVTAEMIKEHLPAPAKDVKILLCGPPPMVSAMKKATESLGYTKARPVSKLEDQVFCF.

The helical transmembrane segment at 11-31 (LSAVLVKFAPFAVAVIAILAA) threads the bilayer. The FAD-binding FR-type domain maps to 47 to 152 (SEFQNFVLKE…RGPKGAMVYT (106 aa)). FAD contacts are provided by residues 132–147 (TTLK…GPKG) and 158–195 (HIGM…KIDL).

The protein belongs to the flavoprotein pyridine nucleotide cytochrome reductase family. Monomer. Component of the 2-(3-amino-3-carboxypropyl)histidine synthase complex composed of dph1, dph2, dph3 and a NADH-dependent reductase, predominantly cbr1. Requires FAD as cofactor.

It is found in the mitochondrion outer membrane. The enzyme catalyses 2 Fe(III)-[cytochrome b5] + NADH = 2 Fe(II)-[cytochrome b5] + NAD(+) + H(+). It carries out the reaction 2 Fe(3+)-[Dph3] + NADH = 2 Fe(2+)-[Dph3] + NAD(+) + H(+). It functions in the pathway protein modification; peptidyl-diphthamide biosynthesis. Functionally, NADH-dependent reductase for dph3 and cytochrome b5. Required for the first step of diphthamide biosynthesis, a post-translational modification of histidine which occurs in elongation factor 2. Dph1 and dph2 transfer a 3-amino-3-carboxypropyl (ACP) group from S-adenosyl-L-methionine (SAM) to a histidine residue, the reaction is assisted by a reduction system comprising dph3 and a NADH-dependent reductase, predominantly cbr1. By reducing dph3, also involved in the formation of the tRNA wobble base modification mcm5s 2U (5-methoxycarbonylmethyl-2-thiouridine), mediated by the elongator complex. The cytochrome b5/NADH cytochrome b5 reductase electron transfer system supports the catalytic activity of several sterol biosynthetic enzymes. The polypeptide is NADH-cytochrome b5 reductase 1 (cbr1) (Aspergillus terreus (strain NIH 2624 / FGSC A1156)).